The primary structure comprises 1018 residues: Ubiquitin carboxyl-terminal hydrolase 35 (1018 aa).

The region spanning 441–926 is the USP domain; it reads IGLINLGNTC…TAYVLFYRQR (486 aa). Cys-450 (nucleophile) is an active-site residue. Disordered regions lie at residues 544–566 and 610–757; these read QKLKQSSSPSPPEEPPAPSSTSV and RLGS…GSEG. Positions 552–561 are enriched in pro residues; it reads PSPPEEPPAP. At Ser-613 the chain carries Phosphoserine. Basic and acidic residues-rich tracts occupy residues 673-691, 699-709, and 718-728; these read QEERIEREEEGKEERTEKE, STRGEGEREKE, and KVEKETEKEAE. His-862 (proton acceptor) is an active-site residue. The tract at residues 984 to 1011 is disordered; that stretch reads HWGRGFDEDKDEDEGSPGGCNPAGGNGG. The segment covering 999–1011 has biased composition (gly residues); sequence SPGGCNPAGGNGG.

This sequence belongs to the peptidase C19 family. Homodimer (via C-terminal region). Interacts with HSP90AA1. Post-translationally, ubiquitinated by CHIP/STUB1 in an HSP90-dependent manner; leading to proteasomal degradation. This ubiquitination can be reversed through auto-deubiquitinating activity. In terms of tissue distribution, expressed in testis, pancreas and skeletal muscle.

It is found in the cytoplasm. The protein localises to the mitochondrion. The catalysed reaction is Thiol-dependent hydrolysis of ester, thioester, amide, peptide and isopeptide bonds formed by the C-terminal Gly of ubiquitin (a 76-residue protein attached to proteins as an intracellular targeting signal).. Its function is as follows. Deubiquitinase that plays a role in different processes including cell cycle regulation, mitophagy or endoplasmic reticulum stress. Inhibits TNFalpha-induced NF-kappa-B activation through stabilizing TNIP2 protein via deubiquitination. Plays an essential role during mitosis by deubiquitinating and thereby regulating the levels of Aurora B/AURKB protein. In addition, regulates the protein levels of other key component of the chromosomal passenger complex (CPC) such as survivin/BIRC5 or Borealin/CDCA8 by enhancing their stability. Regulates the degradation of mitochondria through the process of autophagy termed mitophagy. This chain is Ubiquitin carboxyl-terminal hydrolase 35 (USP35), found in Homo sapiens (Human).